A 373-amino-acid chain; its full sequence is Cobalt-precorrin-5B C(1)-methyltransferase (373 aa).

It belongs to the CbiD family.

The catalysed reaction is Co-precorrin-5B + S-adenosyl-L-methionine = Co-precorrin-6A + S-adenosyl-L-homocysteine. The protein operates within cofactor biosynthesis; adenosylcobalamin biosynthesis; cob(II)yrinate a,c-diamide from sirohydrochlorin (anaerobic route): step 6/10. Functionally, catalyzes the methylation of C-1 in cobalt-precorrin-5B to form cobalt-precorrin-6A. This Listeria monocytogenes serotype 4b (strain CLIP80459) protein is Cobalt-precorrin-5B C(1)-methyltransferase.